We begin with the raw amino-acid sequence, 219 residues long: Glucagon-2 (219 aa).

The N-terminal stretch at 1 to 20 (MKSTCYMIGILLLILQNTYQ) is a signal peptide. Propeptides lie at residues 21 to 50 (SPVP…LKEV), 84 to 95 (SGGLSRRNADYE), 136 to 140 (NAEIE), 175 to 178 (IRYS), and 213 to 219 (KDLLEEH). The tract at residues 23-43 (VPEADGSSRSVKAARNEAVDD) is disordered.

Belongs to the glucagon family.

The protein resides in the secreted. Promotes hydrolysis of glycogen and lipids, and raises the blood sugar level. The protein is Glucagon-2 (gcg2) of Xenopus laevis (African clawed frog).